We begin with the raw amino-acid sequence, 191 residues long: Recombination protein RecR (191 aa).

The C4-type zinc finger occupies 56-71; that stretch reads CQNCNFLQSNNICHFC. A Toprim domain is found at 78-170; sequence KQLMIFETTS…KVTKLAQGLP (93 aa).

It belongs to the RecR family.

In terms of biological role, may play a role in DNA repair. It seems to be involved in an RecBC-independent recombinational process of DNA repair. It may act with RecF and RecO. The polypeptide is Recombination protein RecR (Mycoplasmopsis pulmonis (strain UAB CTIP) (Mycoplasma pulmonis)).